A 348-amino-acid chain; its full sequence is Alanine racemase (348 aa).

Residue K34 is the Proton acceptor; specific for D-alanine of the active site. The residue at position 34 (K34) is an N6-(pyridoxal phosphate)lysine. R127 lines the substrate pocket. Catalysis depends on Y243, which acts as the Proton acceptor; specific for L-alanine. A substrate-binding site is contributed by M291.

It belongs to the alanine racemase family. Requires pyridoxal 5'-phosphate as cofactor.

It catalyses the reaction L-alanine = D-alanine. It functions in the pathway amino-acid biosynthesis; D-alanine biosynthesis; D-alanine from L-alanine: step 1/1. Its function is as follows. Catalyzes the interconversion of L-alanine and D-alanine. May also act on other amino acids. This Coprothermobacter proteolyticus (strain ATCC 35245 / DSM 5265 / OCM 4 / BT) protein is Alanine racemase (alr).